The chain runs to 72 residues: MPKPEIHPTWFNETPIVCDGKPLCYIGSTKSELQVDIWLANHPFYTDSQTIIDSEGRVERFMKKYGINSTND.

This sequence belongs to the bacterial ribosomal protein bL31 family. Type A subfamily. As to quaternary structure, part of the 50S ribosomal subunit.

Its subcellular location is the plastid. The protein resides in the chloroplast. In terms of biological role, binds the 23S rRNA. This Trieres chinensis (Marine centric diatom) protein is Large ribosomal subunit protein bL31c.